The following is a 583-amino-acid chain: MRRHPQTATKHLFVSGGVASSLGKGLTASSLGQLLTARGLRVTMQKLDPYLNVDPGTMNPFQHGEVFVTEDGAETDLDVGHYERFLDRDLSGSANVTTGQVYSTVIAKERRGEYLGDTVQVIPHITDEIKRRIMAMAEPNADGRRPDVVITEIGGTVGDIESQPFLEAARQVRHDLGRENVFFLHVSLVPYLAPSGELKTKPTQHSVAALRSIGITPDALILRCDRDVPEALKNKIALMCDVDIDGIISTPDAPSIYDIPKVLHREELDAFVVRRLNLPFRDVDWTEWDDLLRRVHEPKETVRIALVGKYVELSDAYLSVIEAIRAGGFKHRAKVEISWVGSDDCQTDGGVASALGDVHGVLIPGGFGIRGIEGKISAISYARSRGLPVFGLCLGLQCIVIEAARSVGLTEANSAEFEPGTPDPVISTMADQEHIVSGQADLGGTMRLGAYPAVLESGSIVAEAYQSTKVSERHRHRYEVNNAYRDRIAESGLRFSGTSPDGHLVEFVEYPPEQHPFVVGTQAHPELKSRPTRPHPLFAAFVKAAIDYKEGELLPVEMPERVSNGAERRDQVGQSIPEPANRG.

Positions 1–278 are amidoligase domain; sequence MRRHPQTATK…DAFVVRRLNL (278 aa). Ser-20 contributes to the CTP binding site. Ser-20 serves as a coordination point for UTP. Residues 21-26 and Asp-78 contribute to the ATP site; that span reads SLGKGL. 2 residues coordinate Mg(2+): Asp-78 and Glu-152. CTP is bound by residues 159–161, 199–204, and Lys-235; these read DIE and KTKPTQ. UTP-binding positions include 199-204 and Lys-235; that span reads KTKPTQ. In terms of domain architecture, Glutamine amidotransferase type-1 spans 303 to 551; it reads RIALVGKYVE…VKAAIDYKEG (249 aa). Residue Gly-366 coordinates L-glutamine. Cys-393 (nucleophile; for glutamine hydrolysis) is an active-site residue. L-glutamine contacts are provided by residues 394-397, Glu-416, and Arg-477; that span reads LGLQ. Residues His-524 and Glu-526 contribute to the active site. Residues 559–583 form a disordered region; that stretch reads PERVSNGAERRDQVGQSIPEPANRG.

This sequence belongs to the CTP synthase family. Homotetramer.

It catalyses the reaction UTP + L-glutamine + ATP + H2O = CTP + L-glutamate + ADP + phosphate + 2 H(+). It carries out the reaction L-glutamine + H2O = L-glutamate + NH4(+). The catalysed reaction is UTP + NH4(+) + ATP = CTP + ADP + phosphate + 2 H(+). The protein operates within pyrimidine metabolism; CTP biosynthesis via de novo pathway; CTP from UDP: step 2/2. Its activity is regulated as follows. Allosterically activated by GTP, when glutamine is the substrate; GTP has no effect on the reaction when ammonia is the substrate. The allosteric effector GTP functions by stabilizing the protein conformation that binds the tetrahedral intermediate(s) formed during glutamine hydrolysis. Inhibited by the product CTP, via allosteric rather than competitive inhibition. In terms of biological role, catalyzes the ATP-dependent amination of UTP to CTP with either L-glutamine or ammonia as the source of nitrogen. Regulates intracellular CTP levels through interactions with the four ribonucleotide triphosphates. The chain is CTP synthase from Mycobacterium marinum (strain ATCC BAA-535 / M).